A 147-amino-acid chain; its full sequence is Methylated-DNA--protein-cysteine methyltransferase (147 aa).

C112 (nucleophile; methyl group acceptor) is an active-site residue.

This sequence belongs to the MGMT family.

It localises to the cytoplasm. It catalyses the reaction a 6-O-methyl-2'-deoxyguanosine in DNA + L-cysteinyl-[protein] = S-methyl-L-cysteinyl-[protein] + a 2'-deoxyguanosine in DNA. It carries out the reaction a 4-O-methyl-thymidine in DNA + L-cysteinyl-[protein] = a thymidine in DNA + S-methyl-L-cysteinyl-[protein]. Functionally, involved in the cellular defense against the biological effects of O6-methylguanine (O6-MeG) and O4-methylthymine (O4-MeT) in DNA. Repairs the methylated nucleobase in DNA by stoichiometrically transferring the methyl group to a cysteine residue in the enzyme. This is a suicide reaction: the enzyme is irreversibly inactivated. In Archaeoglobus fulgidus (strain ATCC 49558 / DSM 4304 / JCM 9628 / NBRC 100126 / VC-16), this protein is Methylated-DNA--protein-cysteine methyltransferase.